A 160-amino-acid chain; its full sequence is MSQLTHITERGEAHMVDASAKADTVREARASAYVTMARATLAMILDGQHHKGDVFATARIAGIQAAKRTWELIPLCHPLMLSKVEVQLTAETEQHWVRIDAVCRLTGKTGVEMEALTAASVAALTIYDMCKAVQKDMFIGPVRLLAKSGGKSGDFTGDEV.

Substrate is bound by residues 75–77 (LCH) and 113–114 (ME). Aspartate 128 is an active-site residue.

The protein belongs to the MoaC family. In terms of assembly, homohexamer; trimer of dimers.

The enzyme catalyses (8S)-3',8-cyclo-7,8-dihydroguanosine 5'-triphosphate = cyclic pyranopterin phosphate + diphosphate. The protein operates within cofactor biosynthesis; molybdopterin biosynthesis. Catalyzes the conversion of (8S)-3',8-cyclo-7,8-dihydroguanosine 5'-triphosphate to cyclic pyranopterin monophosphate (cPMP). This chain is Cyclic pyranopterin monophosphate synthase, found in Sodalis glossinidius (strain morsitans).